A 279-amino-acid chain; its full sequence is Lysozyme-like protein 2 (279 aa).

The N-terminal stretch at Met-1–Pro-19 is a signal peptide. The region spanning Met-47 to Met-265 is the Ch-type lysozyme domain.

It belongs to the glycosyl hydrolase 25 family. As to expression, expressed in intestine.

Involved in resistance to Gram-positive bacteria P.aeruginosa or B.thuringiensis infection. The sequence is that of Lysozyme-like protein 2 from Caenorhabditis elegans.